The following is a 148-amino-acid chain: Large ribosomal subunit protein bL9 (148 aa).

It belongs to the bacterial ribosomal protein bL9 family.

Binds to the 23S rRNA. This is Large ribosomal subunit protein bL9 from Stutzerimonas stutzeri (strain A1501) (Pseudomonas stutzeri).